Reading from the N-terminus, the 245-residue chain is Ureidoacrylate amidohydrolase RutB (245 aa).

Catalysis depends on aspartate 38, which acts as the Proton acceptor. The active site involves lysine 147. The Nucleophile role is filled by cysteine 180.

Belongs to the isochorismatase family. RutB subfamily.

It catalyses the reaction (Z)-3-ureidoacrylate + H2O + H(+) = (Z)-3-aminoacrylate + NH4(+) + CO2. It carries out the reaction (Z)-3-ureidoacrylate + H2O = (Z)-3-aminoacrylate + carbamate + H(+). The catalysed reaction is (Z)-2-methylureidoacrylate + H2O + H(+) = (Z)-2-methylaminoacrylate + NH4(+) + CO2. Its function is as follows. Hydrolyzes ureidoacrylate to form aminoacrylate and carbamate. The carbamate hydrolyzes spontaneously, thereby releasing one of the nitrogen atoms of the pyrimidine ring as ammonia and one of its carbon atoms as CO2. This is Ureidoacrylate amidohydrolase RutB from Acinetobacter baylyi (strain ATCC 33305 / BD413 / ADP1).